An 851-amino-acid chain; its full sequence is Probable alpha,alpha-trehalose-phosphate synthase [UDP-forming] 7 (851 aa).

Ser-5 is subject to Phosphoserine. Thr-32 is subject to Phosphothreonine. The segment at 59–540 (DRMIIVANRL…SRSFLQDLER (482 aa)) is glycosyltransferase.

In the N-terminal section; belongs to the glycosyltransferase 20 family. The protein in the C-terminal section; belongs to the trehalose phosphatase family. In terms of assembly, binds to the phosphopeptide-binding site of GRF/14-3-3. Post-translationally, phosphorylated. As to expression, expressed in seedlings, leaves, roots, stems, flowers and siliques.

It carries out the reaction D-glucose 6-phosphate + UDP-alpha-D-glucose = alpha,alpha-trehalose 6-phosphate + UDP + H(+). The polypeptide is Probable alpha,alpha-trehalose-phosphate synthase [UDP-forming] 7 (TPS7) (Arabidopsis thaliana (Mouse-ear cress)).